The sequence spans 600 residues: MSMRTEYCGLVTEHLLGQTVSLCGWVQRRRDHGGVIFIDLRDREGLVQVVCDPDRAEMFATAEGVRNEFCVQIKGLVRNRPEGTVNAGLKSGKIEVLCHELNVLNASVTPPFQLDDDNLSETTRLTHRVLDLRRPQMQHNLRLRYRVAIEARKYLDEQGFIDIETPMLTKSTPEGARDYLVPSRVNAGQFFALPQSPQLFKQLLMVANFDRYYQITKCFRDEDLRADRQPEFTQIDCETSFLGEQEIRDLFEDMIRHIFKTTIDVELDATFPVMPYSEAMARFGSDKPDLRVQLEFTELTDAMKDVDFKVFSTPANAKDGRVAALRVPKGGELSRGDIDGYTEFVRIYGAKGLAWIKVNEKAKGRDGLQSPIVKNLHDASIAAILERTGAEDGDIIFFAADRAKVVNDSLGALRLKIGHSEFGKANGLVQAGWKPLWVVDFPMFEYDDEDARYVAAHHPFTSPKDEHLEYLETDPGRCLAKAYDMVLNGWEIGGGSVRIHREEVQSKVFRALKIGAEEAQLKFGFLLDALQYGAPPHGGIAFGLDRIVTMMAGADSIRDVIAFPKTQRAQDLLTQAPSPVDERQLRELHIRLRQPEQPKA.

An L-aspartate-binding site is contributed by E174. An aspartate region spans residues 198-201 (QLFK). R220 is a binding site for L-aspartate. ATP is bound by residues 220–222 (RDE) and Q229. Position 457 (H457) interacts with L-aspartate. E491 provides a ligand contact to ATP. Residue R498 participates in L-aspartate binding. Residue 543–546 (GLDR) participates in ATP binding.

This sequence belongs to the class-II aminoacyl-tRNA synthetase family. Type 1 subfamily. In terms of assembly, homodimer.

It localises to the cytoplasm. It catalyses the reaction tRNA(Asx) + L-aspartate + ATP = L-aspartyl-tRNA(Asx) + AMP + diphosphate. Its function is as follows. Aspartyl-tRNA synthetase with relaxed tRNA specificity since it is able to aspartylate not only its cognate tRNA(Asp) but also tRNA(Asn). Reaction proceeds in two steps: L-aspartate is first activated by ATP to form Asp-AMP and then transferred to the acceptor end of tRNA(Asp/Asn). The sequence is that of Aspartate--tRNA(Asp/Asn) ligase from Burkholderia ambifaria (strain ATCC BAA-244 / DSM 16087 / CCUG 44356 / LMG 19182 / AMMD) (Burkholderia cepacia (strain AMMD)).